A 391-amino-acid chain; its full sequence is Protein CAJ1 (391 aa).

A J domain is found at 4–73; the sequence is ETEYYDILGI…RSKYDQFGKE (70 aa). Residues 119–161 form a disordered region; sequence KEDEEGTAATETEKADESTDGGMVKHDTNKAESLKKDKLSKEQ. Over residues 129–161 the composition is skewed to basic and acidic residues; it reads ETEKADESTDGGMVKHDTNKAESLKKDKLSKEQ. Lysine 132 is covalently cross-linked (Glycyl lysine isopeptide (Lys-Gly) (interchain with G-Cter in ubiquitin)).

This is Protein CAJ1 (CAJ1) from Saccharomyces cerevisiae (strain ATCC 204508 / S288c) (Baker's yeast).